The chain runs to 346 residues: Outer membrane protein A (346 aa).

Positions 1-21 are cleaved as a signal peptide; the sequence is MKKTAIAIAVALAGFATVAQA. 8 beta stranded membrane-spanning segments follow: residues 27–37, 55–66, 70–78, 96–107, 112–120, 142–151, 156–163, and 182–190; these read TWYTGAKLGWS, QLGAGAFGGYQV, VGFEMGYDW, QGVQLTAKLGYP, LDIYTRLGG, PVFAGGVEYA, IATRLEYQ, and MLSLGVSYR. The hinge-like stretch occupies residues 197–208; the sequence is APVVAPAPAPAP. 4 repeat units span residues 201 to 202, 203 to 204, 205 to 206, and 207 to 208. Residues 201–208 are 4 X 2 AA tandem repeats of A-P; the sequence is APAPAPAP. Residues 210 to 338 enclose the OmpA-like domain; the sequence is VQTKHFTLKS…RVEIEVKGIK (129 aa). An intrachain disulfide couples Cys311 to Cys323.

The protein belongs to the outer membrane OOP (TC 1.B.6) superfamily. OmpA family. In terms of assembly, monomer and homodimer.

It localises to the cell outer membrane. Functionally, with TolR probably plays a role in maintaining the position of the peptidoglycan cell wall in the periplasm. Acts as a porin with low permeability that allows slow penetration of small solutes; an internal gate slows down solute passage. Its function is as follows. Required for conjugation with F-type plasmids; probably serves as the mating receptor on recipient cells. The polypeptide is Outer membrane protein A (Escherichia coli O157:H7).